The following is a 320-amino-acid chain: MTFRARHLLGIEHLAPDEIRSVLDLADSYVDLNRRTMKQSDALAGMTQINMFFENSTRTQSSFELAGKRLGADVMNMAVAQSSVKKGETLLDTAMTLNAMHPDLLVVRHPASGAVNLLASKVNCAVLNAGDGRHEHPTQALLDALTIRRAKGRIQRLTVAICGDIAHSRVARSNLILLGKMENRVRLIAPPTLMPPGVGEFGCELYDDMKKGLEGADVVMMLRLQKERMDGAFIPSEREYYHRFGLDAEKLAFAKEDAIVMHPGPMNRGVEIDGTLADDINRSVIQDQVEMGVAVRMACMDLLARNLRAERGRAAVGVMA.

2 residues coordinate carbamoyl phosphate: arginine 58 and threonine 59. Lysine 86 is an L-aspartate binding site. Carbamoyl phosphate contacts are provided by arginine 108, histidine 136, and glutamine 139. L-aspartate is bound by residues arginine 169 and arginine 223. Carbamoyl phosphate contacts are provided by glycine 264 and proline 265.

Belongs to the aspartate/ornithine carbamoyltransferase superfamily. ATCase family. In terms of assembly, heterododecamer (2C3:3R2) of six catalytic PyrB chains organized as two trimers (C3), and six regulatory PyrI chains organized as three dimers (R2).

The catalysed reaction is carbamoyl phosphate + L-aspartate = N-carbamoyl-L-aspartate + phosphate + H(+). It participates in pyrimidine metabolism; UMP biosynthesis via de novo pathway; (S)-dihydroorotate from bicarbonate: step 2/3. Its function is as follows. Catalyzes the condensation of carbamoyl phosphate and aspartate to form carbamoyl aspartate and inorganic phosphate, the committed step in the de novo pyrimidine nucleotide biosynthesis pathway. The sequence is that of Aspartate carbamoyltransferase catalytic subunit from Cereibacter sphaeroides (strain ATCC 17029 / ATH 2.4.9) (Rhodobacter sphaeroides).